We begin with the raw amino-acid sequence, 317 residues long: E3 ubiquitin-protein ligase NRDP1 (317 aa).

The segment at 18-57 (CPICSGVLEEPVQAPHCEHAFCNACITQWFSQQQTCPVDR) adopts an RING-type; degenerate zinc-finger fold. Residues 78–138 (KLQIACDNAV…LPNHNCIKHL (61 aa)) form an SIAH-type; degenerate zinc finger.

As to quaternary structure, interacts with USP8, ERBB3, PRKN and BIRC6. Interacts with CSF2RB, EPOR, IL3RA, MYD88 and TBK1. Interacts with Clec16a. Post-translationally, autoubiquitinated. Autoubiquitination leads to proteasomal degradation. Deubiquitinated by USP8 to get stabilized which induces apoptosis.

The enzyme catalyses S-ubiquitinyl-[E2 ubiquitin-conjugating enzyme]-L-cysteine + [acceptor protein]-L-lysine = [E2 ubiquitin-conjugating enzyme]-L-cysteine + N(6)-ubiquitinyl-[acceptor protein]-L-lysine.. It functions in the pathway protein modification; protein ubiquitination. In terms of biological role, acts as E3 ubiquitin-protein ligase and regulates the degradation of target proteins. Polyubiquitinates MYD88. Negatively regulates MYD88-dependent production of pro-inflammatory cytokines. Can promote TRIF-dependent production of type I interferon and inhibits infection with vesicular stomatitis virus. Also promotes activation of TBK1 and IRF3. Involved in the ubiquitination of erythropoietin (EPO) and interleukin-3 (IL-3) receptors. Thus, through maintaining basal levels of cytokine receptors, RNF41 is involved in the control of hematopoietic progenitor cell differentiation into myeloerythroid lineages. Contributes to the maintenance of steady-state ERBB3 levels by mediating its growth factor-independent degradation. Involved in the degradation of the inhibitor of apoptosis BIRC6 and thus is an important regulator of cell death by promoting apoptosis. Also acts as a PRKN modifier that accelerates its degradation, resulting in a reduction of PRKN activity, influencing the balance of intracellular redox state. The RNF41-PRKN pathway regulates autophagosome-lysosome fusion during late mitophagy. Mitophagy is a selective form of autophagy necessary for mitochondrial quality control. This Mus musculus (Mouse) protein is E3 ubiquitin-protein ligase NRDP1 (Rnf41).